Here is a 78-residue protein sequence, read N- to C-terminus: Serine rich endogenous peptide 19 (78 aa).

A signal peptide spans 1-25 (MCNIVVFLLTLTLFLFSGLSNTAFA). The SCOOP motif signature appears at 50-64 (KIEVDGSCSRRAPGR). Residues 56–58 (SCS) carry the SxS motif essential for MIK2 binding motif. Residues 57 to 78 (CSRRAPGRRRPPNRPPKPCTKP) form a disordered region. Pro residues predominate over residues 69-78 (NRPPKPCTKP).

Belongs to the serine rich endogenous peptide (SCOOP) phytocytokine family. Interacts with MIK2 (via extracellular leucine-rich repeat domain); this interaction triggers the formation of complex between MIK2 and the BAK1/SERK3 and SERK4 coreceptors, and subsequent BAK1 activation by phosphorylation.

The protein localises to the cell membrane. Its subcellular location is the secreted. It localises to the extracellular space. The protein resides in the apoplast. In terms of biological role, brassicaceae-specific phytocytokine (plant endogenous peptide released into the apoplast) perceived by MIK2 in a BAK1/SERK3 and SERK4 coreceptors-dependent manner, that modulates various physiological and antimicrobial processes including growth prevention and reactive oxygen species (ROS) response regulation. In Arabidopsis thaliana (Mouse-ear cress), this protein is Serine rich endogenous peptide 19.